We begin with the raw amino-acid sequence, 578 residues long: Probable lysosomal cobalamin transporter (578 aa).

2 helical membrane-spanning segments follow: residues 8-28 (LIWV…SVFI) and 46-66 (IFAI…VALV). Asn-70 carries an N-linked (GlcNAc...) asparagine glycan. The next 2 membrane-spanning stretches (helical) occupy residues 95–115 (VVYY…IPFT) and 145–165 (TITF…VPVA). N-linked (GlcNAc...) asparagine glycosylation is present at Asn-168. 6 helical membrane passes run 188–208 (ALTF…VLYT), 312–332 (LLGG…MLLT), 347–367 (GYIL…VQAA), 375–395 (VIFT…IAIV), 419–439 (LTTA…SMVV), and 506–526 (FFGV…LIVV). Residues 539 to 578 (RQMDEDAEEAEEEGLLASTGRRLDTAWQDITGRSNRQRDS) are disordered. A compositionally biased stretch (acidic residues) spans 540–552 (QMDEDAEEAEEEG).

Belongs to the LIMR family. LMBRD1 subfamily.

It is found in the lysosome membrane. Its function is as follows. Probable lysosomal cobalamin transporter. Required to export cobalamin from lysosomes allowing its conversion to cofactors. This chain is Probable lysosomal cobalamin transporter, found in Aspergillus terreus (strain NIH 2624 / FGSC A1156).